The chain runs to 159 residues: MGLYTFENEFTSEIPPPRLFKAFVLDADNLIPKIAPQAIKHAEILEGNGGPGTIKKITFGEGSQYGYVKHRVDSIDEASYSYAYTLIEGDALTDTIEKISYEAKLVASGSGSTIKSISHYHTKGDIEIKEEHVKAGKEKAHGLFKLIESYLKDHPDAYN.

The protein belongs to the BetVI family.

The sequence is that of Major allergen Pyr c 1 (PYRC1) from Pyrus communis (Pear).